The primary structure comprises 89 residues: Albumin-1 (89 aa).

Ala-1 is a signal peptide. 3 disulfides stabilise this stretch: Cys-4–Cys-21, Cys-8–Cys-23, and Cys-16–Cys-33. A propeptide spanning residues 39 to 46 (LSSVAKMI) is cleaved from the precursor.

The C-terminal glycine may be removed from A1b.

In terms of biological role, A1b binds to basic 7S globulin (BG) and stimulates its phosphorylation activity. The sequence is that of Albumin-1 (LEG) from Vigna radiata var. radiata (Mung bean).